The primary structure comprises 251 residues: Blue-light absorbing proteorhodopsin (251 aa).

A signal peptide spans 1-18 (MGKLLLILGSAIALPSFA). 7 helical membrane passes run 30–50 (VGVSFWLVTAGMLAATVFFFV), 65–85 (VSGLITGIAFWHYLYMRGVWI), 97–117 (IDWLLTVPLQVVEFYLILAAC), 120–140 (VAASLFKKLLAGSLVMLGAGF), 144–164 (AGLAPVLPAFIIGMAGWLYMI), 190–210 (MMMIIVVGWAIYPAGYAAGYL), and 223–243 (LIYNLADFVNKILFGLIIWNV). An N6-(retinylidene)lysine modification is found at Lys-233.

This sequence belongs to the archaeal/bacterial/fungal opsin family. Contains one covalently linked retinal chromophore.

It localises to the cell membrane. Functionally, light-driven proton pump. May have a regulatory rather than energy harvesting function, based on light-induced opening of proton channels, to modulate cell physiology depending on light intensity variations. Could be, therefore, a sensory rhodopsin, potentially associated with a transducer component. This Gamma-proteobacterium Hot 75m4 protein is Blue-light absorbing proteorhodopsin.